A 652-amino-acid chain; its full sequence is Sciellin (652 aa).

Residues 1–10 are compositionally biased toward basic residues; the sequence is MSNFSSRKKS. 2 disordered regions span residues 1-29 and 43-180; these read MSNF…QQGF and SWIK…KPLG. Basic and acidic residues predominate over residues 66-95; that stretch reads NSHDALDRKLIERDEPKATISRYRSEDMLD. Residue K82 is modified to N6-acetyllysine. The segment covering 97-110 has biased composition (polar residues); it reads TLSSFRTPQSTKTP. Residues 111–130 show a composition bias toward low complexity; it reads AVSSFNANTTATASTPATTP. Pro residues predominate over residues 161 to 170; sequence LHPPLPPKPC. Tandem repeats lie at residues 207 to 226, 227 to 241, 242 to 261, 262 to 281, 282 to 301, 302 to 320, 321 to 340, 341 to 360, 361 to 380, 381 to 398, 399 to 418, 419 to 438, 439 to 458, 459 to 477, and 478 to 496. A 15 X approximate tandem repeats region spans residues 207–496; that stretch reads TEDLDDIIRV…VNSHVAEKNG (290 aa). Phosphoserine is present on S264. Phosphoserine is present on S343. The interval 353–385 is disordered; sequence EVNRSNKGGPSLDNFTKGVPARSRANQRDQDLD. The segment at 436-455 is disordered; sequence NQRNHDVDSTIRGNPTGTRC. Positions 446–455 are enriched in polar residues; the sequence is IRGNPTGTRC. Positions 583–649 constitute an LIM zinc-binding domain; the sequence is DMCTYCRKPL…EPCYSKVMAK (67 aa).

In terms of tissue distribution, expressed in the upper layers of stratified epithelia, including, ependyma and choroid plexus of the brain ventricles.

It is found in the cytoplasm. Its subcellular location is the membrane. In terms of biological role, may function in the assembly or regulation of proteins in the cornified envelope. The LIM domain may be involved in homotypic or heterotypic associations and may function to localize sciellin to the cornified envelope. This Mus musculus (Mouse) protein is Sciellin (Scel).